A 117-amino-acid polypeptide reads, in one-letter code: UPF0102 protein Ssed_4252 (117 aa).

This sequence belongs to the UPF0102 family.

This Shewanella sediminis (strain HAW-EB3) protein is UPF0102 protein Ssed_4252.